The sequence spans 508 residues: Protoporphyrinogen oxidase 2, chloroplastic/mitochondrial (508 aa).

The N-terminal 22 residues, 1–22, are a transit peptide targeting the chloroplast and mitochondrion; sequence MASGAVADHQIEAVSGKRVAVV. Residues 23–28, 46–47, and 68–71 each bind FAD; these read GAGVSG, EA, and GANT. Residues 219-239 are disordered; that stretch reads KGGKSRDTKSSPGTKKGSRGS. FAD is bound by residues Val268 and 475–477; that span reads LSV.

This sequence belongs to the protoporphyrinogen/coproporphyrinogen oxidase family. Protoporphyrinogen oxidase subfamily. The cofactor is FAD.

Its subcellular location is the plastid. It localises to the chloroplast. It is found in the mitochondrion. The enzyme catalyses protoporphyrinogen IX + 3 O2 = protoporphyrin IX + 3 H2O2. Its pathway is porphyrin-containing compound metabolism; protoporphyrin-IX biosynthesis; protoporphyrin-IX from protoporphyrinogen-IX: step 1/1. The protein operates within porphyrin-containing compound metabolism; chlorophyll biosynthesis. Functionally, catalyzes the 6-electron oxidation of protoporphyrinogen-IX to form protoporphyrin-IX. The protein is Protoporphyrinogen oxidase 2, chloroplastic/mitochondrial (PPOX2) of Arabidopsis thaliana (Mouse-ear cress).